Here is a 140-residue protein sequence, read N- to C-terminus: uncharacterized protein (140 aa).

The N-terminal stretch at 1–22 (MRLRWQTIVLLLLILGGASASA) is a signal peptide.

This is an uncharacterized protein from Archaeoglobus fulgidus (strain ATCC 49558 / DSM 4304 / JCM 9628 / NBRC 100126 / VC-16).